The sequence spans 138 residues: Basic phospholipase A2 homolog 7 (138 aa).

The first 16 residues, 1 to 16 (MRTLWLMAVLLVGVEG), serve as a signal peptide directing secretion. 6 disulfide bridges follow: Cys-42–Cys-131, Cys-44–Cys-60, Cys-59–Cys-111, Cys-65–Cys-138, Cys-66–Cys-104, and Cys-91–Cys-102. An important for membrane-damaging activities in eukaryotes and bacteria; heparin-binding region spans residues 121 to 133 (KKKKINLKLFCKK).

It belongs to the phospholipase A2 family. Group II subfamily. K49 sub-subfamily. In terms of tissue distribution, expressed by the venom gland.

The protein resides in the secreted. In terms of biological role, snake venom phospholipase A2 homolog that lacks enzymatic activity. Is myotoxic and displays edema-inducing activities. A model of myotoxic mechanism has been proposed: an apo Lys49-PLA2 is activated by the entrance of a hydrophobic molecule (e.g. fatty acid) at the hydrophobic channel of the protein leading to a reorientation of a monomer. This reorientation causes a transition between 'inactive' to 'active' states, causing alignment of C-terminal and membrane-docking sites (MDoS) side-by-side and putting the membrane-disruption sites (MDiS) in the same plane, exposed to solvent and in a symmetric position for both monomers. The MDoS region stabilizes the toxin on membrane by the interaction of charged residues with phospholipid head groups. Subsequently, the MDiS region destabilizes the membrane with penetration of hydrophobic residues. This insertion causes a disorganization of the membrane, allowing an uncontrolled influx of ions (i.e. calcium and sodium), and eventually triggering irreversible intracellular alterations and cell death. The sequence is that of Basic phospholipase A2 homolog 7 from Craspedocephalus gramineus (Bamboo pit viper).